A 178-amino-acid chain; its full sequence is Ribosome maturation factor RimM (178 aa).

The 75-residue stretch at 103–177 folds into the PRC barrel domain; that stretch reads SKDEYYFFEI…KIVVKVPEWL (75 aa).

The protein belongs to the RimM family. As to quaternary structure, binds ribosomal protein uS19.

Its subcellular location is the cytoplasm. Functionally, an accessory protein needed during the final step in the assembly of 30S ribosomal subunit, possibly for assembly of the head region. Essential for efficient processing of 16S rRNA. May be needed both before and after RbfA during the maturation of 16S rRNA. It has affinity for free ribosomal 30S subunits but not for 70S ribosomes. This is Ribosome maturation factor RimM from Thermosipho africanus (strain TCF52B).